A 283-amino-acid polypeptide reads, in one-letter code: Probable protein phosphatase 2C 17 (283 aa).

In terms of domain architecture, PPM-type phosphatase spans 32–282 (KYGFSLIKGK…DDISCIVVRF (251 aa)). D69, G70, D234, and D273 together coordinate Mn(2+).

Belongs to the PP2C family. The cofactor is Mg(2+). Mn(2+) serves as cofactor.

The enzyme catalyses O-phospho-L-seryl-[protein] + H2O = L-seryl-[protein] + phosphate. It catalyses the reaction O-phospho-L-threonyl-[protein] + H2O = L-threonyl-[protein] + phosphate. The polypeptide is Probable protein phosphatase 2C 17 (Arabidopsis thaliana (Mouse-ear cress)).